Here is a 495-residue protein sequence, read N- to C-terminus: Averantin hydroxylase (495 aa).

A helical membrane pass occupies residues 12-32; the sequence is ILLLIVLTVLTPPSLALYRLW. Residues Asn-258 and Asn-289 are each glycosylated (N-linked (GlcNAc...) asparagine). Cys-436 contacts heme.

This sequence belongs to the cytochrome P450 family. Heme serves as cofactor.

It is found in the membrane. The catalysed reaction is (1'S)-averantin + reduced [NADPH--hemoprotein reductase] + O2 = (1'S,5'R)-5'-hydroxyaverantin + oxidized [NADPH--hemoprotein reductase] + H2O. The enzyme catalyses (1'S)-averantin + reduced [NADPH--hemoprotein reductase] + O2 = (1'S,5'S)-5'-hydroxyaverantin + oxidized [NADPH--hemoprotein reductase] + H2O + H(+). Its pathway is mycotoxin biosynthesis; aflatoxin biosynthesis. Averantin hydroxylase; part of the gene cluster that mediates the biosynthesis of aflatoxins, a group of polyketide-derived furanocoumarins, and part of the most toxic and carcinogenic compounds among the known mycotoxins. The four major aflatoxins produced by A.parasiticus are aflatoxin B1 (AFB1), aflatoxin B2 (AFB2), aflatoxin G1 (AFG1) and aflatoxin G2 (AFG2). Within the aflatoxin pathway, the cytochrome P450 monooxygenase aflG catalyzes the hydroxylation of AVN to 5'hydroxyaverantin (HAVN). The biosynthesis of aflatoxins begins with the norsolorinic acid synthase aflC that combines a hexanoyl starter unit produced by the fatty acid synthase aflA/aflB and 7 malonyl-CoA extender units to synthesize the precursor NOR. The second step is the conversion of NOR to averantin and requires the norsolorinic acid ketoreductase aflD, which catalyzes the dehydration of norsolorinic acid to form (1'S)-averantin. The norsolorinic acid reductases aflE and aflF may also play a role in the conversion of NOR to AVN. The cytochrome P450 monooxygenase aflG then catalyzes the hydroxylation of AVN to 5'hydroxyaverantin (HAVN). The next step is performed by the 5'-hydroxyaverantin dehydrogenase aflH that transforms HAVN to 5'-oxoaverantin (OAVN) which is further converted to averufin (AVF) by aflK that plays a dual role in the pathway, as a 5'-oxoaverantin cyclase that mediates conversion of 5'-oxoaverantin, as well as a versicolorin B synthase in a later step in the pathway. The averufin oxidase aflI catalyzes the conversion of AVF to versiconal hemiacetal acetate (VHA). VHA is then the substrate for the versiconal hemiacetal acetate esterase aflJ to yield versiconal (VAL). Versicolorin B synthase aflK then converts VAL to versicolorin B (VERB) by closing the bisfuran ring of aflatoxin which is required for DNA-binding, thus giving to aflatoxin its activity as a mutagen. Then, the activity of the versicolorin B desaturase aflL leads to versicolorin A (VERA). A branch point starts from VERB since it can also be converted to dihydrodemethylsterigmatocystin (DMDHST), probably also by aflL, VERA being a precursor for aflatoxins B1 and G1, and DMDHST for aflatoxins B2 and G2. Next, the versicolorin reductase aflM and the cytochrome P450 monooxygenase aflN are involved in conversion of VERA to demethylsterigmatocystin (DMST). AflX and aflY seem also involved in this step, through probable aflX-mediated epoxide ring-opening step following versicolorin A oxidation and aflY-mediated Baeyer-Villiger oxidation required for the formation of the xanthone ring. The methyltransferase aflO then leads to the modification of DMST to sterigmatocystin (ST), and of DMDHST to dihydrosterigmatocystin (DHST). Both ST and DHST are then substrates of the O-methyltransferase aflP to yield O-methylsterigmatocystin (OMST) and dihydro-O-methylsterigmatocystin (DHOMST), respectively. Finally OMST is converted to aflatoxins B1 and G1, and DHOMST to aflatoxins B2 and G2, via the action of several enzymes including O-methylsterigmatocystin oxidoreductase aflQ, the cytochrome P450 monooxygenase aflU, but also the NADH-dependent flavin oxidoreductase nadA which is specifically required for the synthesis of AFG1. This Aspergillus parasiticus (strain ATCC 56775 / NRRL 5862 / SRRC 143 / SU-1) protein is Averantin hydroxylase.